We begin with the raw amino-acid sequence, 832 residues long: Cation/H(+) antiporter 21 (832 aa).

12 consecutive transmembrane segments (helical) span residues 33-55, 61-81, 99-119, 132-152, 161-181, 200-220, 236-256, 278-298, 319-339, 352-372, 379-399, and 413-433; these read ISAA…RILY, LCLP…PTVL, LLET…GLGL, VIIA…LYYL, ILAG…PDLA, CAAV…MAIF, STIA…AWIF, IICS…AFLF, FLSG…ADIG, VVTS…SIFL, GLAI…ILNA, and HLTL…AIAY. The segment covering 792–802 has biased composition (polar residues); the sequence is RQTAENNNQEP. The tract at residues 792 to 832 is disordered; that stretch reads RQTAENNNQEPVQGKAKTDHEATPFMEDEDDEVEHQYSMRR.

Belongs to the monovalent cation:proton antiporter 2 (CPA2) transporter (TC 2.A.37) family. CHX (TC 2.A.37.4) subfamily. In terms of tissue distribution, specifically expressed in root endodermal cells. Expressed in seedlings, roots, leaves, flowers, flower buds and pollen.

The protein localises to the cell membrane. In terms of biological role, operates as a Na(+)/H(+) antiporter that plays a role in regulation of xylem Na(+) concentration and, consequently, Na(+) accumulation in the leaf. Required for pollen tube guidance, but not for normal pollen development. May also be involved in the development or function of the female gametophyte. The sequence is that of Cation/H(+) antiporter 21 (CHX21) from Arabidopsis thaliana (Mouse-ear cress).